The sequence spans 486 residues: Betaine aldehyde dehydrogenase (486 aa).

Positions 23 and 90 each coordinate K(+). Position 147–149 (147–149 (GAW)) interacts with NAD(+). The active-site Charge relay system is the lysine 159. NAD(+) is bound by residues 173 to 176 (KPSE) and 226 to 229 (ESGT). Leucine 241 is a binding site for K(+). Glutamate 247 acts as the Proton acceptor in catalysis. NAD(+) is bound by residues glycine 249, cysteine 281, and glutamate 382. Cysteine 281 (nucleophile) is an active-site residue. A Cysteine sulfenic acid (-SOH) modification is found at cysteine 281. Lysine 452 and glycine 455 together coordinate K(+). Glutamate 459 functions as the Charge relay system in the catalytic mechanism.

This sequence belongs to the aldehyde dehydrogenase family. Dimer of dimers. K(+) serves as cofactor.

It carries out the reaction betaine aldehyde + NAD(+) + H2O = glycine betaine + NADH + 2 H(+). Its pathway is amine and polyamine biosynthesis; betaine biosynthesis via choline pathway; betaine from betaine aldehyde: step 1/1. In terms of biological role, involved in the biosynthesis of the osmoprotectant glycine betaine. Catalyzes the irreversible oxidation of betaine aldehyde to the corresponding acid. The chain is Betaine aldehyde dehydrogenase from Vibrio vulnificus (strain CMCP6).